The following is a 1014-amino-acid chain: Klotho (1014 aa).

Positions Met1–Ala35 are cleaved as a signal peptide. Residues Glu36–Pro983 are Extracellular-facing. 2 glycosyl hydrolase-1 regions span residues Phe59–Phe508 and Leu517–Phe955. Residues Asn161, Asn285, Asn346, Asn609, Asn614, and Asn696 are each glycosylated (N-linked (GlcNAc...) asparagine). The helical transmembrane segment at Leu984 to Tyr1004 threads the bilayer. The Cytoplasmic portion of the chain corresponds to Tyr1005–Gln1014.

This sequence belongs to the glycosyl hydrolase 1 family. Klotho subfamily. In terms of assembly, homodimer. Interacts with FGF23 and FGFR1.

The protein resides in the cell membrane. It is found in the apical cell membrane. The protein localises to the secreted. It carries out the reaction a beta-D-glucuronoside + H2O = D-glucuronate + an alcohol. Functionally, may have weak glycosidase activity towards glucuronylated steroids. However, it lacks essential active site Glu residues at positions 241 and 874, suggesting it may be inactive as a glycosidase in vivo. May be involved in the regulation of calcium and phosphorus homeostasis by inhibiting the synthesis of active vitamin D. Essential factor for the specific interaction between FGF23 and FGFR1. The Klotho peptide generated by cleavage of the membrane-bound isoform may be an anti-aging circulating hormone which would extend life span by inhibiting insulin/IGF1 signaling. The sequence is that of Klotho (KL) from Macaca fascicularis (Crab-eating macaque).